Consider the following 663-residue polypeptide: (R)-specific secondary-alkylsulfatase (663 aa).

The N-terminal stretch at 1 to 28 (MSRFIRASQRRTLLATLIAATLAQPLLA) is a signal peptide. Zn(2+) contacts are provided by histidine 179, histidine 181, aspartate 183, and histidine 184. Position 232 (glutamine 232) interacts with sulfate. Residues glutamate 291 and aspartate 310 each coordinate Zn(2+). Residues 318–323 (NLLTPR) and arginine 328 each bind sulfate. Position 355 (histidine 355) interacts with Zn(2+). Residue tyrosine 417 coordinates sulfate.

The protein belongs to the metallo-beta-lactamase superfamily. Type III sulfatase family. As to quaternary structure, homodimer.

The enzyme catalyses an (R)-secondary-alkyl sulfate + H2O = an (S)-secondary-alcohol + sulfate.. Alkylsulfatase that catalyzes the enantioselective hydrolysis of secondary-alkylsulfates with strict inversion of configuration, leading to the formation of homochiral (S)-configurated alcohols and nonreacted sulfate esters. The substrate spectrum includes a range of linear, branched or cyclic sec-alkylsulfates. Can use sec-alkylsulfate esters bearing aromatic, olefinic and acetylenic moieties. Acts by cleaving the C-O bond, resulting in inversion at the carbon. The chain is (R)-specific secondary-alkylsulfatase from Pseudomonas sp.